A 576-amino-acid chain; its full sequence is NADH-ubiquinone oxidoreductase chain 5 (576 aa).

16 helical membrane-spanning segments follow: residues 6–26 (ISFY…LKFL), 46–66 (IVMT…VLLI), 88–108 (ILLV…PNLI), 109–129 (SILL…IYFQ), 149–169 (VALL…YIFY), 179–199 (MMII…QIPF), 211–231 (TPVS…YLLI), 240–260 (WWMG…AGLG), 270–289 (IIAL…LSMG), 294–316 (AFFH…GSII), 339–359 (CSCF…AGFY), 363–383 (LILE…LFFF), 423–443 (IFFL…LMFL), 459–479 (LFVC…SLFF), 492–512 (FAGS…NYPL), and 556–576 (IYLL…VLVN).

It belongs to the complex I subunit 5 family.

The protein localises to the mitochondrion inner membrane. It carries out the reaction a ubiquinone + NADH + 5 H(+)(in) = a ubiquinol + NAD(+) + 4 H(+)(out). Its function is as follows. Core subunit of the mitochondrial membrane respiratory chain NADH dehydrogenase (Complex I) that is believed to belong to the minimal assembly required for catalysis. Complex I functions in the transfer of electrons from NADH to the respiratory chain. The immediate electron acceptor for the enzyme is believed to be ubiquinone. The chain is NADH-ubiquinone oxidoreductase chain 5 (ND5) from Anopheles quadrimaculatus (Common malaria mosquito).